We begin with the raw amino-acid sequence, 486 residues long: Galactose-1-phosphate uridylyltransferase (486 aa).

Belongs to the galactose-1-phosphate uridylyltransferase type 2 family.

The protein localises to the cytoplasm. The catalysed reaction is alpha-D-galactose 1-phosphate + UDP-alpha-D-glucose = alpha-D-glucose 1-phosphate + UDP-alpha-D-galactose. It participates in carbohydrate metabolism; galactose metabolism. In Lacticaseibacillus casei (strain BL23) (Lactobacillus casei), this protein is Galactose-1-phosphate uridylyltransferase.